The chain runs to 383 residues: Peroxisomal membrane protein PEX15 (383 aa).

At M1–S331 the chain is on the cytoplasmic side. Residues V332–L349 form a helical membrane-spanning segment. Over K350–I383 the chain is Lumenal.

In terms of assembly, interacts with PEX6. Interacts with PEX19; targets PEX15 to the peroxisome. Post-translationally, phosphorylated.

It is found in the peroxisome membrane. The protein localises to the endoplasmic reticulum membrane. Functionally, peroxisomal docking factor that anchors PEX1 and PEX6 to peroxisome membranes. PEX26 is therefore required for the formation of the PEX1-PEX6 AAA ATPase complex, a complex that mediates the extraction of the PEX5 receptor from peroxisomal membrane. The protein is Peroxisomal membrane protein PEX15 (PEX15) of Saccharomyces cerevisiae (strain ATCC 204508 / S288c) (Baker's yeast).